We begin with the raw amino-acid sequence, 576 residues long: TRAF-type zinc finger domain-containing protein 1 (576 aa).

An N-acetylalanine modification is found at Ala-2. Residues 27–103 (IHEIHCQRNI…DLELSVVKLK (77 aa)) form a TRAF-type zinc finger. Ser-278, Ser-320, Ser-326, Ser-327, Ser-409, Ser-415, Ser-430, and Ser-450 each carry phosphoserine. The interval 402-432 (EGIPTQDSQPEDRSPELSRRRVKHQGDLSSG) is disordered. The segment covering 411–420 (PEDRSPELSR) has biased composition (basic and acidic residues). Disordered stretches follow at residues 465–491 (LNSS…GSQD) and 529–576 (HGSP…EEEE). Ser-531 carries the phosphoserine modification. Over residues 540–552 (GSRSSRVTPTAAS) the composition is skewed to polar residues.

Interacts with MAVS, TICAM1, TRAF1, TRAF2, TRAF3 and TRAF6. Expressed in vascular smooth muscle cells.

Its function is as follows. Negative feedback regulator that controls excessive innate immune responses. Regulates both Toll-like receptor 4 (TLR4) and DDX58/RIG1-like helicases (RLH) pathways. May inhibit the LTR pathway by direct interaction with TRAF6 and attenuation of NF-kappa-B activation. May negatively regulate the RLH pathway downstream from MAVS and upstream of NF-kappa-B and IRF3. This chain is TRAF-type zinc finger domain-containing protein 1 (Trafd1), found in Rattus norvegicus (Rat).